Here is a 186-residue protein sequence, read N- to C-terminus: NADH-quinone oxidoreductase subunit B 2 (186 aa).

Residues 1–27 (MPSFTQPHSAPRNFQFPGQQRQGDPTM) form a disordered region. Residues Cys65, Cys66, Cys130, and Cys160 each contribute to the [4Fe-4S] cluster site.

It belongs to the complex I 20 kDa subunit family. In terms of assembly, NDH-1 is composed of 14 different subunits. Subunits NuoB, C, D, E, F, and G constitute the peripheral sector of the complex. It depends on [4Fe-4S] cluster as a cofactor.

The protein resides in the cell inner membrane. The enzyme catalyses a quinone + NADH + 5 H(+)(in) = a quinol + NAD(+) + 4 H(+)(out). NDH-1 shuttles electrons from NADH, via FMN and iron-sulfur (Fe-S) centers, to quinones in the respiratory chain. The immediate electron acceptor for the enzyme in this species is believed to be ubiquinone. Couples the redox reaction to proton translocation (for every two electrons transferred, four hydrogen ions are translocated across the cytoplasmic membrane), and thus conserves the redox energy in a proton gradient. The sequence is that of NADH-quinone oxidoreductase subunit B 2 from Rhizobium etli (strain ATCC 51251 / DSM 11541 / JCM 21823 / NBRC 15573 / CFN 42).